The chain runs to 515 residues: Pisatin demethylase (515 aa).

Heme is bound at residue C453.

The protein belongs to the cytochrome P450 family. Requires heme as cofactor.

Can detoxify the phytoalexin pisatin from garden pea. Pisatin is an antimicrobial compound produced by pea in response to infection by plant pathogens. The polypeptide is Pisatin demethylase (PDAT9) (Fusarium vanettenii (Neocosmospora pisi)).